Consider the following 261-residue polypeptide: Phosphonates import ATP-binding protein PhnC (261 aa).

The region spanning 15 to 257 (LCLENTSAVY…LERSAIPPKR (243 aa)) is the ABC transporter domain. ATP is bound at residue 48–55 (GPSGSGKS).

This sequence belongs to the ABC transporter superfamily. Phosphonates importer (TC 3.A.1.9.1) family. As to quaternary structure, the complex is composed of two ATP-binding proteins (PhnC), two transmembrane proteins (PhnE) and a solute-binding protein (PhnD).

Its subcellular location is the cell inner membrane. It carries out the reaction phosphonate(out) + ATP + H2O = phosphonate(in) + ADP + phosphate + H(+). Its function is as follows. Part of the ABC transporter complex PhnCDE involved in phosphonates import. Responsible for energy coupling to the transport system. The sequence is that of Phosphonates import ATP-binding protein PhnC from Hyphomonas neptunium (strain ATCC 15444).